The following is a 98-amino-acid chain: NADH-ubiquinone oxidoreductase chain 4L (98 aa).

The next 3 helical transmembrane spans lie at 2-22 (TLTT…TLIF), 29-49 (TLLC…ITAL), and 61-81 (ITTL…LTMV).

The protein belongs to the complex I subunit 4L family. In terms of assembly, core subunit of respiratory chain NADH dehydrogenase (Complex I) which is composed of 45 different subunits.

It localises to the mitochondrion inner membrane. It carries out the reaction a ubiquinone + NADH + 5 H(+)(in) = a ubiquinol + NAD(+) + 4 H(+)(out). Core subunit of the mitochondrial membrane respiratory chain NADH dehydrogenase (Complex I) which catalyzes electron transfer from NADH through the respiratory chain, using ubiquinone as an electron acceptor. Part of the enzyme membrane arm which is embedded in the lipid bilayer and involved in proton translocation. The polypeptide is NADH-ubiquinone oxidoreductase chain 4L (MT-ND4L) (Oxymycterus rufus (Red hocicudo)).